Reading from the N-terminus, the 237-residue chain is Methylosome subunit pICln (237 aa).

Position 2 is an N-acetylserine (Ser2). 6 positions are modified to phosphoserine: Ser102, Ser144, Ser193, Ser195, Ser198, and Ser210. Positions 135 to 159 (LHPDPEDEDSDDYDGEEYDVEAHEQ) are disordered. A compositionally biased stretch (acidic residues) spans 139 to 153 (PEDEDSDDYDGEEYD). Residue Thr223 is modified to Phosphothreonine.

It belongs to the pICln (TC 1.A.47) family. Component of the methylosome, a 20S complex containing at least PRMT5/SKB1, WDR77/MEP50 and CLNS1A/pICln. May mediate SNRPD1 and SNRPD3 methylation. Forms a 6S pICln-Sm complex composed of CLNS1A/pICln, SNRPD1, SNRPD2, SNRPE, SNRPF and SNRPG; ring-like structure where CLNS1A/pICln mimics additional Sm proteins and which is unable to assemble into the core snRNP. Interacts with LSM10 and LSM11.

Its subcellular location is the cytoplasm. The protein localises to the cytosol. The protein resides in the nucleus. It localises to the cytoskeleton. Functionally, involved in both the assembly of spliceosomal snRNPs and the methylation of Sm proteins. Chaperone that regulates the assembly of spliceosomal U1, U2, U4 and U5 small nuclear ribonucleoproteins (snRNPs), the building blocks of the spliceosome, and thereby plays an important role in the splicing of cellular pre-mRNAs. Most spliceosomal snRNPs contain a common set of Sm proteins SNRPB, SNRPD1, SNRPD2, SNRPD3, SNRPE, SNRPF and SNRPG that assemble in a heptameric protein ring on the Sm site of the small nuclear RNA to form the core snRNP (Sm core). In the cytosol, the Sm proteins SNRPD1, SNRPD2, SNRPE, SNRPF and SNRPG are trapped in an inactive 6S pICln-Sm complex by the chaperone CLNS1A that controls the assembly of the core snRNP. Dissociation by the SMN complex of CLNS1A from the trapped Sm proteins and their transfer to an SMN-Sm complex triggers the assembly of core snRNPs and their transport to the nucleus. This chain is Methylosome subunit pICln (CLNS1A), found in Homo sapiens (Human).